We begin with the raw amino-acid sequence, 619 residues long: Bifunctional glutathionylspermidine synthetase/amidase (619 aa).

The interval 2 to 195 is gsp amidase; that stretch reads SKGTTSQDAP…LGWMIQTEDT (194 aa). The 143-residue stretch at 34–176 folds into the Peptidase C51 domain; sequence DPQEYEDDAV…MVVENGCYTL (143 aa). Residue Gln-58 participates in glutathionylspermidine binding. The S-(gamma-glutamyl-cysteinyl-glycyl)-cysteine intermediate role is filled by Cys-59. Cysteine sulfenic acid (-SOH); transient is present on Cys-59. Residues Arg-64, 78–81, and Asn-149 contribute to the glutathionylspermidine site; that span reads VGMA. The tract at residues 196–205 is linker; the sequence is EYSLPQPEIA. The tract at residues 206–619 is gsp synthetase; sequence GELLKISGAR…DIEPLIVVKK (414 aa). Arg-316 is a glutathione binding site. 316–318 lines the ATP pocket; the sequence is RMD. Residues Asp-318, Glu-330, and Asn-332 each coordinate Mg(2+). Position 335 (Ser-335) interacts with glutathione. Glu-391 contacts spermidine. Positions 392 and 446 each coordinate glutathione. ATP-binding positions include Lys-498, Lys-533, 539 to 540, 568 to 571, Gln-582, and 603 to 605; these read CG, QQLW, and LVI. Spermidine is bound at residue Asp-610.

In the C-terminal section; belongs to the glutathionylspermidine synthase preATP-grasp family. Homodimer. Oxidation of Cys-59 to sulfenic acid during oxidative stress selectively inhibits the amidase activity which leads to a rapid increase in the amounts of intracellular Gsp and Gsp S-thiolated proteins (GspSSPs).

The enzyme catalyses spermidine + glutathione + ATP = glutathionylspermidine + ADP + phosphate + H(+). It carries out the reaction glutathionylspermidine + H2O = spermidine + glutathione. The protein operates within sulfur metabolism; glutathione metabolism. It functions in the pathway amine and polyamine metabolism; spermidine metabolism. When exposed to oxidative stress, Gsp amidase activity is transiently inhibited in vivo by oxidation of the catalytic Cys-59 thiol to sulfenic acid; this modification does not affect Gsp synthetase activity. Gsp amidase activity is negatively autoregulated by the Gsp synthetase domain, and is activated by the Gsp synthetase substrates, GSH and ATP-Mg(2+); the occupancy of the synthetase active site may initiate communication through the protein as manifest by the release of inhibition of the amidase activity. A tetrahedral phosphonate analog of glutathionylspermidine, designed as a mimic of the proposed tetrahedral intermediate for either reaction, inhibits the synthetase activity (Ki of 10 uM) but does not inhibit the amidase activity. Amidase activity is inhibited by iodoacetamide in vitro. Catalyzes the formation of an amide bond between glutathione (GSH) and spermidine coupled with hydrolysis of ATP; also catalyzes the opposing reaction, i.e. the hydrolysis of glutathionylspermidine (Gsp) back to glutathione and spermidine. The amidase active site can also hydrolyze Gsp-disulfide (Gsp-S-S-Gsp) to Gsp-SG and Gsp S-thiolated proteins (GspSSPs) to GSH S-thiolated protein (GSSPs). Likely acts synergistically with glutaredoxin to regulate the redox environment of E.coli and defend against oxidative damage. In vitro, the amidase active site also catalyzes hydrolysis of amide and ester derivatives of glutathione (e.g. glutathione ethyl ester and glutathione amide) but lacks activity toward acetylspermidine (N1 and N8) and acetylspermine (N1). The chain is Bifunctional glutathionylspermidine synthetase/amidase (gss) from Escherichia coli (strain K12).